The following is a 404-amino-acid chain: Methyltransferase-like protein 22 (404 aa).

Disordered stretches follow at residues 60 to 102 (TDSG…SLQA) and 115 to 145 (QLDE…DKVH). Residues 68 to 78 (SHRDVHTKEPP) are compositionally biased toward basic and acidic residues. Residues 79 to 88 (SAETGSTGSP) are compositionally biased toward low complexity. The residue at position 132 (S132) is a Phosphoserine.

The protein belongs to the methyltransferase superfamily. METTL22 family. In terms of assembly, interacts with members of the heat shock protein 90 and 70 families; these proteins probably are methylation substrates.

The protein resides in the nucleus. The enzyme catalyses L-lysyl-[protein] + 3 S-adenosyl-L-methionine = N(6),N(6),N(6)-trimethyl-L-lysyl-[protein] + 3 S-adenosyl-L-homocysteine + 3 H(+). In terms of biological role, protein N-lysine methyltransferase. Trimethylates KIN at Lys-135 (in vitro). The protein is Methyltransferase-like protein 22 (METTL22) of Homo sapiens (Human).